The following is a 261-amino-acid chain: Lys-63-specific deubiquitinase BRCC36 (261 aa).

The MPN domain maps to Val-6–Gln-149. Zn(2+) is bound by residues His-92, His-94, and Asp-105. The JAMM motif signature appears at His-92–Asp-105.

The protein belongs to the peptidase M67A family. BRCC36 subfamily. As to quaternary structure, component of the BRCA1-A complex, at least composed of brca1, bard1, uimc1/rap80, abraxas1, brcc3/brcc36, babam2 and babam1/nba1. In the BRCA1-A complex, interacts directly with abraxas1 and babam2. Component of the BRISC complex, at least composed of abraxas2, brcc3/brcc36, babam2 and babam1/nba1. Within the complex, interacts directly with abraxas2. Both the BRCA1-A complex and the BRISC complex bind polyubiquitin. Requires Zn(2+) as cofactor.

It localises to the nucleus. The protein localises to the cytoplasm. It is found in the cytoskeleton. Its subcellular location is the spindle pole. Its function is as follows. Metalloprotease that specifically cleaves 'Lys-63'-linked polyubiquitin chains. Does not have activity toward 'Lys-48'-linked polyubiquitin chains. Component of the BRCA1-A complex, a complex that specifically recognizes 'Lys-63'-linked ubiquitinated histones H2A and H2AX at DNA lesions sites, leading to target the brca1-bard1 heterodimer to sites of DNA damage at double-strand breaks (DSBs). In the BRCA1-A complex, it specifically removes 'Lys-63'-linked ubiquitin on histones H2A and H2AX, antagonizing the rnf8-dependent ubiquitination at double-strand breaks (DSBs). Catalytic subunit of the BRISC complex, a multiprotein complex that specifically cleaves 'Lys-63'-linked ubiquitin in various substrates. Mediates the specific 'Lys-63'-specific deubiquitination associated with the COP9 signalosome complex (CSN), via the interaction of the BRISC complex with the CSN complex. The BRISC complex is required for normal mitotic spindle assembly and microtubule attachment to kinetochores via its role in deubiquitinating numa1. Plays a role in interferon signaling via its role in the deubiquitination of the interferon receptor ifnar1; deubiquitination increases ifnar1 activity by enhancing its stability and cell surface expression. Acts as a regulator of the NLRP3 inflammasome by mediating deubiquitination of nlrp3. Down-regulates the response to bacterial lipopolysaccharide (LPS) via its role in ifnar1 deubiquitination. This Xenopus tropicalis (Western clawed frog) protein is Lys-63-specific deubiquitinase BRCC36 (brcc3).